Reading from the N-terminus, the 151-residue chain is Methylglyoxal synthase (151 aa).

The MGS-like domain occupies 6–151; that stretch reads RTMPAHKHVA…DYDAYLAERT (146 aa). Residues H19, K23, 45–48, and 65–66 contribute to the substrate site; these read TGTT and SG. Residue D71 is the Proton donor/acceptor of the active site. H98 is a substrate binding site.

It belongs to the methylglyoxal synthase family.

The enzyme catalyses dihydroxyacetone phosphate = methylglyoxal + phosphate. Its function is as follows. Catalyzes the formation of methylglyoxal from dihydroxyacetone phosphate. This Vibrio campbellii (strain ATCC BAA-1116) protein is Methylglyoxal synthase.